Reading from the N-terminus, the 394-residue chain is Probable peptidoglycan glycosyltransferase FtsW (394 aa).

The Cytoplasmic segment spans residues 1–27 (MSALRSVAGLLQRWLLPARPAGLYDRQ). The helical transmembrane segment at 28–48 (LVVLALALMAVGLVIVASASI) threads the bilayer. Residues 49 to 64 (PEGIAINNDPFMFVKR) lie on the Periplasmic side of the membrane. A helical transmembrane segment spans residues 65 to 85 (HGLFLVMALGISWFVLQVPMA). Over 86–88 (RWQ) the chain is Cytoplasmic. The helical transmembrane segment at 89-109 (HYNGPMLVLAILMLVLVLLVG) threads the bilayer. At 110–123 (RSVNGSIRWLPLGP) the chain is on the periplasmic side. Residues 124-144 (FNLQPAEFGKLALFVYLAGYL) form a helical membrane-spanning segment. Over 145 to 154 (VRRQSEVRER) the chain is Cytoplasmic. A helical membrane pass occupies residues 155–175 (FIGFMKPMAVLFVVAILLLAQ). Residue P176 is a topological domain, periplasmic. Residues 177 to 197 (DLGSVVVMFVTSLGMLFLAGA) form a helical membrane-spanning segment. A topological domain (cytoplasmic) is located at residue R198. Residues 199 to 219 (LGQFIGLILVGVSAVVTLVIA) traverse the membrane as a helical segment. The Periplasmic portion of the chain corresponds to 220–279 (EPYRMRRVTSFLDPWADPFGSGYQLTQSLMAFGRGSWFGEGLGNSIQKMEYLPEAHTDFV). The chain crosses the membrane as a helical span at residues 280-300 (FAILGEELGYAGVLGALFLIF). Residues 301–322 (ALSFKALKLGHQALVAERLYEG) lie on the Cytoplasmic side of the membrane. The chain crosses the membrane as a helical span at residues 323–343 (YLAIGIGIWFSFQTFVNVGAA). Topologically, residues 344–354 (SGMMPTKGLTL) are periplasmic. The chain crosses the membrane as a helical span at residues 355-375 (PLVSYGGSSLIIMMVAVSMLV). Over 376–394 (RIDFELRQASAQARVREVS) the chain is Cytoplasmic.

This sequence belongs to the SEDS family. FtsW subfamily.

It localises to the cell inner membrane. The catalysed reaction is [GlcNAc-(1-&gt;4)-Mur2Ac(oyl-L-Ala-gamma-D-Glu-L-Lys-D-Ala-D-Ala)](n)-di-trans,octa-cis-undecaprenyl diphosphate + beta-D-GlcNAc-(1-&gt;4)-Mur2Ac(oyl-L-Ala-gamma-D-Glu-L-Lys-D-Ala-D-Ala)-di-trans,octa-cis-undecaprenyl diphosphate = [GlcNAc-(1-&gt;4)-Mur2Ac(oyl-L-Ala-gamma-D-Glu-L-Lys-D-Ala-D-Ala)](n+1)-di-trans,octa-cis-undecaprenyl diphosphate + di-trans,octa-cis-undecaprenyl diphosphate + H(+). Its pathway is cell wall biogenesis; peptidoglycan biosynthesis. Functionally, peptidoglycan polymerase that is essential for cell division. The chain is Probable peptidoglycan glycosyltransferase FtsW from Aeromonas salmonicida (strain A449).